A 244-amino-acid chain; its full sequence is tRNA pseudouridine synthase A (244 aa).

Residue D52 is the Nucleophile of the active site. Y110 provides a ligand contact to substrate.

Belongs to the tRNA pseudouridine synthase TruA family. Homodimer.

It catalyses the reaction uridine(38/39/40) in tRNA = pseudouridine(38/39/40) in tRNA. Formation of pseudouridine at positions 38, 39 and 40 in the anticodon stem and loop of transfer RNAs. The sequence is that of tRNA pseudouridine synthase A from Brevibacillus brevis (strain 47 / JCM 6285 / NBRC 100599).